A 535-amino-acid polypeptide reads, in one-letter code: Mannan polymerase I complex VAN1 subunit (535 aa).

Residues 1-64 lie on the Cytoplasmic side of the membrane; that stretch reads MGMFFNLRSN…STPSKFQLTV (64 aa). Residues 22-48 are disordered; the sequence is LPISRNGSSNNIKDKRSEHNSNSLKGK. Phosphoserine is present on serine 25. The helical; Signal-anchor for type II membrane protein transmembrane segment at 65 to 81 threads the bilayer; sequence SITSLIIIAVLSLYLFI. Topologically, residues 82–535 are lumenal; sequence SFLSGMGIGV…REREKRRQSE (454 aa). N-linked (GlcNAc...) asparagine glycosylation is found at asparagine 215 and asparagine 251.

Belongs to the ANP1/MMN9/VAN1 family. As to quaternary structure, component of the M-Pol I complex which contains MNN9 and VAN1. Glycosylated.

It is found in the endoplasmic reticulum membrane. The protein localises to the golgi apparatus membrane. Its function is as follows. Involved in regulation of the phosphorylation of a number of proteins, some of which appear to be important in cell growth control. The M-Pol I complex possesses alpha-1,6-mannosyltransferase activity and is probably involved in the elongation of the mannan backbone of N-linked glycans on cell wall and periplasmic proteins. The polypeptide is Mannan polymerase I complex VAN1 subunit (VAN1) (Saccharomyces cerevisiae (strain ATCC 204508 / S288c) (Baker's yeast)).